A 183-amino-acid polypeptide reads, in one-letter code: Acireductone dioxygenase (183 aa).

Residues 1-21 (MVQAWYMDSDTTTDQREEHQL) form a disordered region. The Fe(2+) site is built by His90, His92, Glu96, and His135. His90, His92, Glu96, and His135 together coordinate Ni(2+).

This sequence belongs to the acireductone dioxygenase (ARD) family. It depends on Fe(2+) as a cofactor. The cofactor is Ni(2+).

It is found in the cytoplasm. The protein resides in the nucleus. It catalyses the reaction 1,2-dihydroxy-5-(methylsulfanyl)pent-1-en-3-one + O2 = 4-methylsulfanyl-2-oxobutanoate + formate + 2 H(+). It carries out the reaction 1,2-dihydroxy-5-(methylsulfanyl)pent-1-en-3-one + O2 = 3-(methylsulfanyl)propanoate + CO + formate + 2 H(+). The protein operates within amino-acid biosynthesis; L-methionine biosynthesis via salvage pathway; L-methionine from S-methyl-5-thio-alpha-D-ribose 1-phosphate: step 5/6. In terms of biological role, catalyzes 2 different reactions between oxygen and the acireductone 1,2-dihydroxy-3-keto-5-methylthiopentene (DHK-MTPene) depending upon the metal bound in the active site. Fe-containing acireductone dioxygenase (Fe-ARD) produces formate and 2-keto-4-methylthiobutyrate (KMTB), the alpha-ketoacid precursor of methionine in the methionine recycle pathway. Ni-containing acireductone dioxygenase (Ni-ARD) produces methylthiopropionate, carbon monoxide and formate, and does not lie on the methionine recycle pathway. This chain is Acireductone dioxygenase, found in Ixodes scapularis (Black-legged tick).